Consider the following 233-residue polypeptide: 7-cyano-7-deazaguanine synthase (233 aa).

13–23 (LSGGLDSATAM) serves as a coordination point for ATP. The Zn(2+) site is built by Cys-197, Cys-207, Cys-210, and Cys-213.

It belongs to the QueC family. Zn(2+) is required as a cofactor.

It catalyses the reaction 7-carboxy-7-deazaguanine + NH4(+) + ATP = 7-cyano-7-deazaguanine + ADP + phosphate + H2O + H(+). Its pathway is purine metabolism; 7-cyano-7-deazaguanine biosynthesis. In terms of biological role, catalyzes the ATP-dependent conversion of 7-carboxy-7-deazaguanine (CDG) to 7-cyano-7-deazaguanine (preQ(0)). In Desulfatibacillum aliphaticivorans, this protein is 7-cyano-7-deazaguanine synthase.